We begin with the raw amino-acid sequence, 322 residues long: Sideroflexin-1 (322 aa).

Residue serine 2 is modified to N-acetylserine. At 2–102 (SGELPPNINI…MSAQVPMNMT (101 aa)) the chain is on the mitochondrial matrix side. A helical membrane pass occupies residues 103–120 (ITGCMMTFYRTTPAVLFW). Residues 121-146 (QWINQSFNAVVNYTNRSGDAPLTVNE) are Mitochondrial intermembrane-facing. Residues 147–167 (LGTAYVSATTGAVATALGLNA) traverse the membrane as a helical segment. The Mitochondrial matrix portion of the chain corresponds to 168–174 (LTKHVSP). Residues 175-195 (LIGRFVPFAAVAAANCINIPL) form a helical membrane-spanning segment. At 196–228 (MRQRELKVGIPVTDENGNRLGESANAAKQAITQ) the chain is on the mitochondrial intermembrane side. The chain crosses the membrane as a helical span at residues 229 to 249 (VVVSRILMAAPGMAIPPFIMN). The Mitochondrial matrix segment spans residues 250 to 266 (TLEKKAFLKRFPWMSAP). The helical transmembrane segment at 267 to 287 (IQVGLVGFCLVFATPLCCALF) threads the bilayer. Residues 288–322 (PQKSSMSVTSLEAELQAKIQESHPELRRVYFNKGL) are Mitochondrial intermembrane-facing.

It belongs to the sideroflexin family. In terms of tissue distribution, highly expressed in tissues with high one-carbon metabolism activity, such as blood, liver and kidney.

The protein localises to the mitochondrion inner membrane. It carries out the reaction L-serine(in) = L-serine(out). It catalyses the reaction L-alanine(in) = L-alanine(out). The enzyme catalyses L-cysteine(in) = L-cysteine(out). In terms of biological role, amino acid transporter importing serine, an essential substrate of the mitochondrial branch of the one-carbon pathway, into mitochondria. Mitochondrial serine is then converted to glycine and formate, which exits to the cytosol where it is used to generate the charged folates that serve as one-carbon donors. May also transport other amino acids including alanine and cysteine. This Homo sapiens (Human) protein is Sideroflexin-1.